A 302-amino-acid polypeptide reads, in one-letter code: Proline dehydrogenase 1 (302 aa).

Lys-95 serves as a coordination point for substrate. Asp-129 is a catalytic residue. Positions 130 and 158 each coordinate FAD. Arg-179 is an active-site residue. Residues 182–184 (KGA) and 221–222 (TH) each bind FAD. 283 to 284 (RR) lines the substrate pocket.

Belongs to the proline oxidase family. FAD serves as cofactor.

The enzyme catalyses L-proline + a quinone = (S)-1-pyrroline-5-carboxylate + a quinol + H(+). It functions in the pathway amino-acid degradation; L-proline degradation into L-glutamate; L-glutamate from L-proline: step 1/2. Its function is as follows. Converts proline to delta-1-pyrroline-5-carboxylate. This is Proline dehydrogenase 1 (fadM) from Bacillus subtilis subsp. natto.